Reading from the N-terminus, the 72-residue chain is Toxin Acra II-3 (72 aa).

The LCN-type CS-alpha/beta domain occupies 4 to 67 (PGNYPLDTRG…VWNAAKNYCK (64 aa)). 3 cysteine pairs are disulfide-bonded: Cys-18–Cys-41, Cys-27–Cys-46, and Cys-31–Cys-48.

Belongs to the long (3 C-C) scorpion toxin superfamily. Sodium channel inhibitor family. Beta subfamily. Expressed by the venom gland.

The protein localises to the secreted. Its function is as follows. Binds to sodium channels (Nav) and affects the channel activation process. This chain is Toxin Acra II-3, found in Androctonus crassicauda (Arabian fat-tailed scorpion).